A 177-amino-acid chain; its full sequence is Protein Flattop (177 aa).

Residues 113 to 177 are disordered; the sequence is ILGKPHDPDS…TPGPQRPAKS (65 aa). Over residues 115–124 the composition is skewed to basic and acidic residues; sequence GKPHDPDSQK. Residues 132-163 are compositionally biased toward polar residues; that stretch reads TKTVQQARSPTIIPSSPAANLNSPDELQSSHP.

This sequence belongs to the Flattop family. As to quaternary structure, microtubule inner protein component of sperm flagellar doublet microtubules. Interacts with DLG3. In terms of tissue distribution, expressed in airway epithelial cells.

It localises to the cytoplasm. Its subcellular location is the cytoskeleton. It is found in the cilium basal body. The protein localises to the cell projection. The protein resides in the cilium. It localises to the apical cell membrane. Its subcellular location is the cilium axoneme. It is found in the flagellum axoneme. In terms of biological role, microtubule inner protein (MIP) part of the dynein-decorated doublet microtubules (DMTs) in cilia axoneme. Acts as a regulator of cilium basal body docking and positioning in mono- and multiciliated cells. Regulates basal body docking and cilia formation in multiciliated lung cells. Regulates kinocilium positioning and stereocilia bundle morphogenesis in the inner ear. This is Protein Flattop from Homo sapiens (Human).